A 272-amino-acid polypeptide reads, in one-letter code: Glutamate racemase (272 aa).

Residues 16 to 17 (DS) and 48 to 49 (YG) each bind substrate. Cys-79 serves as the catalytic Proton donor/acceptor. 80–81 (NT) is a binding site for substrate. Cys-191 functions as the Proton donor/acceptor in the catalytic mechanism. Residue 192-193 (TH) participates in substrate binding.

Belongs to the aspartate/glutamate racemases family.

It catalyses the reaction L-glutamate = D-glutamate. Its pathway is cell wall biogenesis; peptidoglycan biosynthesis. Its function is as follows. Provides the (R)-glutamate required for cell wall biosynthesis. This chain is Glutamate racemase, found in Chlorobium phaeobacteroides (strain DSM 266 / SMG 266 / 2430).